Consider the following 130-residue polypeptide: Translation initiation factor 5A (130 aa).

The residue at position 36 (Lys-36) is a Hypusine.

Belongs to the eIF-5A family.

The protein localises to the cytoplasm. In terms of biological role, functions by promoting the formation of the first peptide bond. The protein is Translation initiation factor 5A (eif5a) of Methanothermobacter thermautotrophicus (strain ATCC 29096 / DSM 1053 / JCM 10044 / NBRC 100330 / Delta H) (Methanobacterium thermoautotrophicum).